Consider the following 159-residue polypeptide: Probable metallophosphoesterase MPN_126 (159 aa).

Residues aspartate 9, histidine 11, aspartate 34, asparagine 53, histidine 75, histidine 107, and histidine 109 each contribute to the Mn(2+) site.

This sequence belongs to the metallophosphoesterase superfamily. YfcE family. It depends on Mn(2+) as a cofactor.

This is Probable metallophosphoesterase MPN_126 from Mycoplasma pneumoniae (strain ATCC 29342 / M129 / Subtype 1) (Mycoplasmoides pneumoniae).